We begin with the raw amino-acid sequence, 208 residues long: Thymidylate kinase (208 aa).

11-18 (GTEGVGKT) serves as a coordination point for ATP.

It belongs to the thymidylate kinase family.

The catalysed reaction is dTMP + ATP = dTDP + ADP. Functionally, phosphorylation of dTMP to form dTDP in both de novo and salvage pathways of dTTP synthesis. The protein is Thymidylate kinase of Psychrobacter sp. (strain PRwf-1).